The sequence spans 464 residues: Chitobiosyldiphosphodolichol beta-mannosyltransferase (464 aa).

Residues 1 to 2 (MA) lie on the Lumenal side of the membrane. Residues 3-23 (ASCLVLLALCLLLPLLLLGGW) form a helical membrane-spanning segment. The Cytoplasmic portion of the chain corresponds to 24 to 99 (KRWRRGRAAR…ELQSLAVGPR (76 aa)). An intramembrane region (helical) is located at residues 100–120 (VFQYGVKVVLQAMYLLWKLMW). At 121–464 (REPGAYIFLQ…QTVLPLVMDT (344 aa)) the chain is on the cytoplasmic side. At Ser-242 the chain carries Phosphoserine. The interval 243 to 262 (PFRARSEPEDPVTERSAFTE) is disordered.

This sequence belongs to the glycosyltransferase group 1 family. Glycosyltransferase 33 subfamily.

Its subcellular location is the endoplasmic reticulum membrane. The enzyme catalyses an N,N'-diacetylchitobiosyl-diphospho-di-trans,poly-cis-dolichol + GDP-alpha-D-mannose = a beta-D-Man-(1-&gt;4)-beta-D-GlcNAc-(1-&gt;4)-alpha-D-GlcNAc-diphospho-di-trans,poly-cis-dolichol + GDP + H(+). Its pathway is protein modification; protein glycosylation. Its function is as follows. Mannosyltransferase that operates in the biosynthetic pathway of dolichol-linked oligosaccharides, the glycan precursors employed in protein asparagine (N)-glycosylation. The assembly of dolichol-linked oligosaccharides begins on the cytosolic side of the endoplasmic reticulum membrane and finishes in its lumen. The sequential addition of sugars to dolichol pyrophosphate produces dolichol-linked oligosaccharides containing fourteen sugars, including two GlcNAcs, nine mannoses and three glucoses. Once assembled, the oligosaccharide is transferred from the lipid to nascent proteins by oligosaccharyltransferases. Catalyzes, on the cytoplasmic face of the endoplasmic reticulum, the addition of the first mannose residues to the dolichol-linked oligosaccharide chain, to produce Man1GlcNAc(2)-PP-dolichol core oligosaccharide. Man1GlcNAc(2)-PP-dolichol is a substrate for ALG2, the following enzyme in the biosynthetic pathway. The sequence is that of Chitobiosyldiphosphodolichol beta-mannosyltransferase from Homo sapiens (Human).